The chain runs to 221 residues: Lysine N-acyltransferase MbtK (221 aa).

The disordered stretch occupies residues 1–34 (MSDAPAESAPAQIDPAQTDPAEQPVQILPRERSD). A substrate-binding site is contributed by histidine 141. The active-site Proton acceptor is the aspartate 179.

The protein belongs to the lysine N-acyltransferase MbtK family. Monomer.

It functions in the pathway siderophore biosynthesis; mycobactin biosynthesis. Functionally, acyltransferase required for the direct transfer of medium- to long-chain fatty acyl moieties from a carrier protein (MbtL) on to the epsilon-amino group of lysine residue in the mycobactin core. This Mycolicibacterium paratuberculosis (strain ATCC BAA-968 / K-10) (Mycobacterium paratuberculosis) protein is Lysine N-acyltransferase MbtK (mbtK).